The following is a 225-amino-acid chain: Ribonuclease 3 (225 aa).

In terms of domain architecture, RNase III spans 4–133; the sequence is FEKLEKLLGY…LIAAIYLDSN (130 aa). Position 46 (Glu-46) interacts with Mg(2+). Asp-50 is a catalytic residue. Mg(2+) contacts are provided by Asn-119 and Glu-122. Residue Glu-122 is part of the active site. One can recognise a DRBM domain in the interval 158-225; sequence DPKTALQEWA…AARKLLHKLK (68 aa).

The protein belongs to the ribonuclease III family. As to quaternary structure, homodimer. Mg(2+) serves as cofactor.

The protein localises to the cytoplasm. It catalyses the reaction Endonucleolytic cleavage to 5'-phosphomonoester.. In terms of biological role, digests double-stranded RNA. Involved in the processing of primary rRNA transcript to yield the immediate precursors to the large and small rRNAs (23S and 16S). Processes some mRNAs, and tRNAs when they are encoded in the rRNA operon. Processes pre-crRNA and tracrRNA of type II CRISPR loci if present in the organism. The sequence is that of Ribonuclease 3 from Rickettsia felis (strain ATCC VR-1525 / URRWXCal2) (Rickettsia azadi).